Reading from the N-terminus, the 887-residue chain is Degenerin-like protein unc-105 (887 aa).

The disordered stretch occupies residues Met1–Met33. Residues Met1–Trp93 lie on the Cytoplasmic side of the membrane. The chain crosses the membrane as a helical span at residues Phe94–Ile114. Residues Ser115 to Thr698 are Extracellular-facing. N-linked (GlcNAc...) asparagine glycans are attached at residues Asn244, Asn450, Asn473, Asn581, and Asn599. The helical transmembrane segment at Gly699–Ala719 threads the bilayer. The Cytoplasmic portion of the chain corresponds to Thr720 to Lys887. 2 disordered regions span residues Ala794–Cys815 and Ser859–Lys887.

Belongs to the amiloride-sensitive sodium channel (TC 1.A.6) family. In terms of tissue distribution, expressed in body wall muscle.

The protein localises to the membrane. Functionally, ion channel which is permeable to small monovalent cations. Shown not to be H+-ion gated. May be mechanosensitive and is required for growth and muscle development. The polypeptide is Degenerin-like protein unc-105 (unc-105) (Caenorhabditis elegans).